The primary structure comprises 72 residues: Lantibiotic lichenicidin VK21 A2 (72 aa).

Residues 1 to 21 (MKTMKNSAAREAFKGANHPAG) are disordered. Positions 1–40 (MKTMKNSAAREAFKGANHPAGMVSEEELKALVGGNDVNPE) are excised as a propeptide. T41 carries the post-translational modification 2-oxobutanoic acid. Residues T42, T45, and T46 each carry the (Z)-2,3-didehydrobutyrine modification. A cross-link (lanthionine (Ser-Cys)) is located at residues 47 to 51 (SSWTC). 2,3-didehydroalanine (Ser) is present on S48. (Z)-2,3-didehydrobutyrine occurs at positions 53 and 57. The segment at residues 59–63 (SASLC) is a cross-link (lanthionine (Ser-Cys)). Cross-links (beta-methyllanthionine (Thr-Cys)) lie at residues 65-68 (TTKC) and 69-72 (TSRC). The residue at position 66 (T66) is a (Z)-2,3-didehydrobutyrine.

In terms of processing, maturation of lantibiotics involves the enzymatic conversion of Thr, and Ser into dehydrated AA and the formation of thioether bonds with cysteine. This is followed by membrane translocation and cleavage of the modified precursor. Post-translationally, the 2,3-didehydrobutyrines are determined to be the Z-isomers.

Its subcellular location is the secreted. Its function is as follows. Lanthionine-containing peptide antibiotic (lantibiotic) active on Gram-positive bacteria. The bactericidal activity of lantibiotics is based on depolarization of energized bacterial cytoplasmic membranes, initiated by the formation of aqueous transmembrane pores. When present individually, LchA2 exhibits activity towards B.subtilis L1 (IC(50)=30 uM), Rhodococcus sp. SS2 (IC(50)=16.6 uM), M.luteus B1314 (IC(50)=2.6 uM), B.megaterium VKM41 (IC(50)=2 uM), S.aureus 209p (IC(50)=20 uM), B.pumilus 2001, B.globigii I, B.amyloliquefaciens I, M.smegmatis 1171 and M.phlei 1291. However, when combined with LchA1, it displays much stronger activity against B.subtilis L1 (IC(50)=0.64 uM), Rhodococcus sp. SS2 (IC(50)=0.64 uM), M.luteus B1314 (IC(50)=0.09 uM), B.megaterium VKM41 (IC(50)=0.12 uM) and S.aureus 209p (IC(50)=0.64 uM). The activity of the combined LchA1 and LchA2 peptides is strongest at a molar ratio of 1. Even when applied at 17-fold concentration of the highest IC(50) values for Gram-positive bacteria, neither the individual nor the combined peptides display activity against Gram-negative bacteria P.aeruginosa PAO1, P.putida I-97 or E.coli C600. This Bacillus licheniformis protein is Lantibiotic lichenicidin VK21 A2.